Consider the following 161-residue polypeptide: Nucleotide-binding protein Sama_2557 (161 aa).

Belongs to the YajQ family.

Nucleotide-binding protein. The chain is Nucleotide-binding protein Sama_2557 from Shewanella amazonensis (strain ATCC BAA-1098 / SB2B).